Consider the following 147-residue polypeptide: Hemoglobin subunit beta (147 aa).

Val2 bears the N-acetylvaline mark. Residues 3–147 (HLTGEEKAAV…VANALAHKYH (145 aa)) enclose the Globin domain. Thr13 bears the Phosphothreonine mark. Ser45 carries the phosphoserine modification. Residue Lys60 is modified to N6-acetyllysine. Residue His64 participates in heme b binding. Lys83 bears the N6-acetyllysine mark. His93 lines the heme b pocket. Cys94 is subject to S-nitrosocysteine. Lys145 carries the N6-acetyllysine modification.

Belongs to the globin family. Heterotetramer of two alpha chains and two beta chains. Red blood cells.

Functionally, involved in oxygen transport from the lung to the various peripheral tissues. The sequence is that of Hemoglobin subunit beta (HBB) from Aotus azarae (Azara's night monkey).